Here is a 308-residue protein sequence, read N- to C-terminus: Glutaminase (308 aa).

The substrate site is built by serine 66, asparagine 117, glutamate 161, asparagine 168, tyrosine 192, tyrosine 244, and valine 262.

This sequence belongs to the glutaminase family. In terms of assembly, homotetramer.

It carries out the reaction L-glutamine + H2O = L-glutamate + NH4(+). In Salmonella arizonae (strain ATCC BAA-731 / CDC346-86 / RSK2980), this protein is Glutaminase.